We begin with the raw amino-acid sequence, 299 residues long: MKPDAHQVKQFLLNLQDTICQQLTAVDGAEFVEDSWQREGGGGGRSRVLRNGGVFEQAGVNFSHVHGEAMPASATAHRPELAGRSFEAMGVSLVVHPHNPYVPTSHANVRFFIAEKPGAEPVWWFGGGFDLTPFYGFEEDAIHWHRTARDLCLPFGEDVYLRYKKWCDDYFYLKHRNEQRGIGGLFFDDLNTPDFDHCFAFMQAVGKGYTDAYLPIVERRKAMAYGERERNFQLYRRGRYVEFNLVWDRGTLFGLQTGGRTESILMSMPPLVRWEYDYHPEAGSPEAALSEFIKVRDWV.

Ser92 lines the substrate pocket. Mn(2+) contacts are provided by His96 and His106. The Proton donor role is filled by His106. Position 108 to 110 (108 to 110 (NVR)) interacts with substrate. Residues His145 and His175 each contribute to the Mn(2+) site. The important for dimerization stretch occupies residues 240 to 275 (YVEFNLVWDRGTLFGLQTGGRTESILMSMPPLVRWE). 258–260 (GGR) lines the substrate pocket.

The protein belongs to the aerobic coproporphyrinogen-III oxidase family. As to quaternary structure, homodimer. The cofactor is Mn(2+).

Its subcellular location is the cytoplasm. It carries out the reaction coproporphyrinogen III + O2 + 2 H(+) = protoporphyrinogen IX + 2 CO2 + 2 H2O. Its pathway is porphyrin-containing compound metabolism; protoporphyrin-IX biosynthesis; protoporphyrinogen-IX from coproporphyrinogen-III (O2 route): step 1/1. In terms of biological role, involved in the heme biosynthesis. Catalyzes the aerobic oxidative decarboxylation of propionate groups of rings A and B of coproporphyrinogen-III to yield the vinyl groups in protoporphyrinogen-IX. This is Oxygen-dependent coproporphyrinogen-III oxidase from Escherichia coli (strain SE11).